A 134-amino-acid chain; its full sequence is Small ribosomal subunit protein uS8c (134 aa).

This sequence belongs to the universal ribosomal protein uS8 family. In terms of assembly, part of the 30S ribosomal subunit.

The protein resides in the plastid. It is found in the chloroplast. In terms of biological role, one of the primary rRNA binding proteins, it binds directly to 16S rRNA central domain where it helps coordinate assembly of the platform of the 30S subunit. The polypeptide is Small ribosomal subunit protein uS8c (rps8) (Aethionema grandiflorum (Persian stone-cress)).